The sequence spans 480 residues: Protein nucleotidyltransferase YdiU (480 aa).

Positions 84, 86, 87, 107, 119, 120, 170, and 177 each coordinate ATP. The Proton acceptor role is filled by Asp-246. Residues Asn-247 and Asp-256 each contribute to the Mg(2+) site. Asp-256 is an ATP binding site.

It belongs to the SELO family. Mg(2+) serves as cofactor. It depends on Mn(2+) as a cofactor.

The catalysed reaction is L-seryl-[protein] + ATP = 3-O-(5'-adenylyl)-L-seryl-[protein] + diphosphate. It carries out the reaction L-threonyl-[protein] + ATP = 3-O-(5'-adenylyl)-L-threonyl-[protein] + diphosphate. The enzyme catalyses L-tyrosyl-[protein] + ATP = O-(5'-adenylyl)-L-tyrosyl-[protein] + diphosphate. It catalyses the reaction L-histidyl-[protein] + UTP = N(tele)-(5'-uridylyl)-L-histidyl-[protein] + diphosphate. The catalysed reaction is L-seryl-[protein] + UTP = O-(5'-uridylyl)-L-seryl-[protein] + diphosphate. It carries out the reaction L-tyrosyl-[protein] + UTP = O-(5'-uridylyl)-L-tyrosyl-[protein] + diphosphate. Functionally, nucleotidyltransferase involved in the post-translational modification of proteins. It can catalyze the addition of adenosine monophosphate (AMP) or uridine monophosphate (UMP) to a protein, resulting in modifications known as AMPylation and UMPylation. In Pseudoalteromonas atlantica (strain T6c / ATCC BAA-1087), this protein is Protein nucleotidyltransferase YdiU.